A 285-amino-acid chain; its full sequence is ATP synthase gamma chain (285 aa).

The protein belongs to the ATPase gamma chain family. As to quaternary structure, F-type ATPases have 2 components, CF(1) - the catalytic core - and CF(0) - the membrane proton channel. CF(1) has five subunits: alpha(3), beta(3), gamma(1), delta(1), epsilon(1). CF(0) has three main subunits: a, b and c.

The protein localises to the cell membrane. Produces ATP from ADP in the presence of a proton gradient across the membrane. The gamma chain is believed to be important in regulating ATPase activity and the flow of protons through the CF(0) complex. The protein is ATP synthase gamma chain of Lysinibacillus sphaericus (strain C3-41).